The sequence spans 168 residues: Signal peptidase I V (168 aa).

Residues 1 to 6 (MKKRFW) are Cytoplasmic-facing. A helical membrane pass occupies residues 7 to 26 (FLAGVVSVVLAIQVKNAVFI). Topologically, residues 27-168 (DYKVEGVSMN…NIVGVISDAE (142 aa)) are extracellular. Catalysis depends on residues Ser34 and Lys75.

Belongs to the peptidase S26 family.

It is found in the cell membrane. The catalysed reaction is Cleavage of hydrophobic, N-terminal signal or leader sequences from secreted and periplasmic proteins.. This is Signal peptidase I V (sipV) from Bacillus subtilis (strain 168).